Consider the following 934-residue polypeptide: MQRYELIRLIGKGGMGEVYLAHDKACSRRVALKRIREDLSGNALLRQRFLREAKIAADLIHPGIVPVYSICSDGEAVYYTMPYIEGFSLKSLLKSVWQKEVLSKELEEKTSVKSFLPIFDKICATVEYIHSKGVLHRDLKPDNILLGLFGEVVIIDWGAAIFKHAKELKLEQDDEAAVSFDERNICYSSMTIPGKIVGTPDYMAPESLLGVEASEKTDIYALGLILYQMLTLAFPYRRKKGRKLSYRDVVLPPIEMSPYREIPPSLSQIAMKAIAINPADRFSSIQELRQALQPYLQGDPEWTVKATLMAKEKSCWKYYDPILLSRYFPVLASSPAQWYNFMLSEVEISASTRVEYTVTKSAVHEGMGILFLPSKEAERGEFYCGYGLWFSVQNHELTVSLIKNGIEIQKKSQEMISQQSRFAILIEKSDNRIAVFVEQALFILHIDYLPSLGNRLGVIIQDLQGMSNIAISESIGALRVSCLAVPDAFLSEKLYDQAAIFYRKIRDSFPGRKESYEAQFRLGVTLLTQIEEQGGDLTQALSSFDYLHGGAGAPLEYLGKALVYQRNGSFVEEIRCLLFALKRYSQHPEIPRLEDHLCFRLYDSLHKHRSEALVFMLLILWIAPEKISVREEERFLRIIYHKQQATLFCQVDKAPLQFRSSKMELFLSFWTGFSLFLPELFRRAGGLRDYQALADIFYVAGVSGNREAFMQFSTALANVSDEITFPESLHNQKVAELMFFVKGVEALRNKDYQKAKKLLWKTPFTLQLYALDMFHIQAFLDEEIESFIDLLQAIYDPTSEEERDHILVYIIQTHLWNRDLERAYKLLNDRFPLDEELAEYSEAFILWGCYLALTGDRVAVKAHFSRCRYKYGKSALIGKCVDGDIFDYLDNLVWWEKKMTLFQSYFLLRCLNESPRRYEKYRQAYLSMENNFFD.

The Protein kinase domain maps to 4–296; sequence YELIRLIGKG…ELRQALQPYL (293 aa). ATP-binding positions include 10–18 and Lys-33; that span reads IGKGGMGEV. The active-site Proton acceptor is Asp-138.

The protein belongs to the protein kinase superfamily. Ser/Thr protein kinase family. Post-translationally, autophosphorylated on serine and threonine residues.

It carries out the reaction L-seryl-[protein] + ATP = O-phospho-L-seryl-[protein] + ADP + H(+). It catalyses the reaction L-threonyl-[protein] + ATP = O-phospho-L-threonyl-[protein] + ADP + H(+). In terms of biological role, together with the serine/threonine kinase Pkn1, may play a role in the specific interactions with host proteins during intracellular growth. This chain is Serine/threonine-protein kinase PknD, found in Chlamydia trachomatis serovar A (strain ATCC VR-571B / DSM 19440 / HAR-13).